Here is a 684-residue protein sequence, read N- to C-terminus: Divalent metal transporter 1 (684 aa).

Residues 1-228 (MEKDFTERST…YRNKLSLYNK (228 aa)) are Cytoplasmic-facing. Positions 153–195 (NKRNNNNNNNNNNNNNNNNNNNNNNNNNNNNNNNNSNNVDNRK) are disordered. A compositionally biased stretch (low complexity) spans 156–191 (NNNNNNNNNNNNNNNNNNNNNNNNNNNNNNNNSNNV). A helical membrane pass occupies residues 229 to 247 (LRMCFNYFGPGWIVAIAYL). The Vacuolar portion of the chain corresponds to 248-275 (DPGNLCSNLNVGLIRSPDPTLEKDYSGY). The chain crosses the membrane as a helical span at residues 276-299 (YLLWIMVYGHMLGFIFQVLSMRLG). The Cytoplasmic segment spans residues 300–319 (HVTGLDLASLCSKEFDRTTS). The helical transmembrane segment at 320 to 345 (TIIYVLVQIAIWGAHIQAIIGTFIAL) threads the bilayer. Residues 346-350 (NLIFG) are Vacuolar-facing. The chain crosses the membrane as a helical span at residues 351–370 (ISVKVAIFYTLFEAIIYSFL). Residues 371–381 (ENKSLGLLENV) lie on the Cytoplasmic side of the membrane. A helical membrane pass occupies residues 382–404 (LSFLVGILAVSFFVNVFMTPINF). The Vacuolar portion of the chain corresponds to 405–423 (KELAISILYPRIPKGKEID). The chain crosses the membrane as a helical span at residues 424 to 445 (ALALLGSIISAHIFYLHTNLTA). The Cytoplasmic segment spans residues 446-465 (KKKSVICNDLSLRRYNTLGT). A helical membrane pass occupies residues 466-487 (IESGGSLFLSCLTNCIIVLTFA). The Vacuolar segment spans residues 488-515 (EVNLKSFERRDQYNLFTAYEVMRKSFGK). Residues 516 to 534 (ISMYIWSFGLLSSGNNSSF) form a helical membrane-spanning segment. The Cytoplasmic segment spans residues 535–554 (MCEYASKSVVEGFLNKKINT). A helical transmembrane segment spans residues 555 to 573 (FVRVFTFRLMLFSLLYMFL). At 574–584 (TLNKYTLDQLT) the chain is on the vacuolar side. The helical transmembrane segment at 585-603 (NFINVIQVLLLPMATIPLY) threads the bilayer. Residues 604–622 (RFSIHENVLGEFRLKKFPK) lie on the Cytoplasmic side of the membrane. The helical transmembrane segment at 623-645 (FAVFLIIIAIIISNVLLTFLDFV) threads the bilayer. Residues 646–650 (HKETS) are Vacuolar-facing. Residues 651–673 (LITIFFLVIFSFLYFGFIIYFFN) form a helical membrane-spanning segment. Over 674-684 (IPIKKNYIQRN) the chain is Cytoplasmic.

This sequence belongs to the NRAMP (TC 2.A.55) family.

It localises to the vacuole membrane. The enzyme catalyses Fe(2+)(in) = Fe(2+)(out). In terms of biological role, iron transporter. Required for parasite development during the blood stages. Required for apicoplast biogenesis. Required for mitochondrial polarization. This Plasmodium falciparum (isolate 3D7) protein is Divalent metal transporter 1.